The primary structure comprises 212 residues: Probable transaldolase (212 aa).

K84 acts as the Schiff-base intermediate with substrate in catalysis.

The protein belongs to the transaldolase family. Type 3B subfamily.

The protein resides in the cytoplasm. The catalysed reaction is D-sedoheptulose 7-phosphate + D-glyceraldehyde 3-phosphate = D-erythrose 4-phosphate + beta-D-fructose 6-phosphate. It participates in carbohydrate degradation; pentose phosphate pathway; D-glyceraldehyde 3-phosphate and beta-D-fructose 6-phosphate from D-ribose 5-phosphate and D-xylulose 5-phosphate (non-oxidative stage): step 2/3. In terms of biological role, transaldolase is important for the balance of metabolites in the pentose-phosphate pathway. The sequence is that of Probable transaldolase from Bacillus velezensis (strain DSM 23117 / BGSC 10A6 / LMG 26770 / FZB42) (Bacillus amyloliquefaciens subsp. plantarum).